Consider the following 403-residue polypeptide: Sulfate adenylyltransferase (403 aa).

It belongs to the sulfate adenylyltransferase family.

The catalysed reaction is sulfate + ATP + H(+) = adenosine 5'-phosphosulfate + diphosphate. The protein operates within sulfur metabolism; hydrogen sulfide biosynthesis; sulfite from sulfate: step 1/3. This chain is Sulfate adenylyltransferase, found in Pelodictyon phaeoclathratiforme (strain DSM 5477 / BU-1).